Here is a 269-residue protein sequence, read N- to C-terminus: Protein TORNADO 2 (269 aa).

Over 1 to 10 (MPLSNNVIGC) the chain is Cytoplasmic. The helical transmembrane segment at 11 to 31 (INFITVLLSIPVIGAGIWLAI) threads the bilayer. Topologically, residues 32-44 (GTVNSCVKLLQWP) are extracellular. A helical membrane pass occupies residues 45–65 (VIILGVLILLVGLAGFIGGFW). Residues 66–71 (RITWLL) are Cytoplasmic-facing. The chain crosses the membrane as a helical span at residues 72–92 (VVYLIAMLILIVLLGCLVGFI). Over 93–231 (YMVTIRGSGH…NIKVDWLKAD (139 aa)) the chain is Extracellular. A glycan (N-linked (GlcNAc...) asparagine) is linked at asparagine 200. Residues 232-252 (IFLLLALIGLIIVYIIGCCAF) traverse the membrane as a helical segment. Topologically, residues 253 to 269 (RNAETEDIFRKYKQGYT) are cytoplasmic.

The protein belongs to the tetraspanin (TM4SF) family. As to expression, expressed in seedlings, roots, leaves, stems, apex, siliques and flowers. Present in ovules, prominently in nucellus and integuments.

The protein resides in the membrane. Functionally, involved in the basipetal transport of auxin (IAA) that modulates growth and organs organization, as well as cell differentiation. Regulates shoot apical meristem (SAM) organization in the peripheral zone. Required for initial meristematic divisions in the epidermal/lateral root cap leading to the formation of epidermal cells and a clone of lateral root cap cells, as well as for the maintenance of the radial pattern of cell specification in the root, thus regulating the distinction between the lateral root cap and epidermis. Together with WIH peptides, promotes megasporogenesis. The chain is Protein TORNADO 2 (TRN2) from Arabidopsis thaliana (Mouse-ear cress).